The chain runs to 79 residues: MORN repeat-containing protein 2 (79 aa).

MORN repeat units lie at residues 15 to 37 and 38 to 60; these read YEGHFKDNMFHGLGTYTFPNGAK and YTGNFNENRVEGEGQYTDIQGLE.

The protein is MORN repeat-containing protein 2 (MORN2) of Bos taurus (Bovine).